The primary structure comprises 23 residues: U22-ctenitoxin-Co1a (23 aa).

Expressed by the venom gland.

Its subcellular location is the secreted. The chain is U22-ctenitoxin-Co1a from Ctenus ornatus (Brazilian spider).